Here is a 210-residue protein sequence, read N- to C-terminus: Large ribosomal subunit protein uL3 (210 aa).

At glutamine 151 the chain carries N5-methylglutamine.

Belongs to the universal ribosomal protein uL3 family. Part of the 50S ribosomal subunit. Forms a cluster with proteins L14 and L19. Post-translationally, methylated by PrmB.

In terms of biological role, one of the primary rRNA binding proteins, it binds directly near the 3'-end of the 23S rRNA, where it nucleates assembly of the 50S subunit. This Aeromonas hydrophila subsp. hydrophila (strain ATCC 7966 / DSM 30187 / BCRC 13018 / CCUG 14551 / JCM 1027 / KCTC 2358 / NCIMB 9240 / NCTC 8049) protein is Large ribosomal subunit protein uL3.